Reading from the N-terminus, the 337-residue chain is 2-oxoglutarate-Fe(II) type oxidoreductase (337 aa).

Residues 179 to 282 form the Fe2OG dioxygenase domain; it reads AIATLRYLHY…RYSIPFFFTG (104 aa). The Fe cation site is built by H205, D207, and H263. Residue R273 participates in 2-oxoglutarate binding.

The protein belongs to the iron/ascorbate-dependent oxidoreductase family. The cofactor is Fe(2+). Endocrocin is specifically produced in conidia.

Its pathway is secondary metabolite biosynthesis. Its function is as follows. 2-oxoglutarate-Fe(II) type oxidoreductase; part of the gene cluster that mediates the biosynthesis of endocrocin, a simple anthraquinone interesting for many biotechnological applications. The pathway begins with the synthesis of atrochrysone thioester by the polyketide synthase (PKS) encA. The atrochrysone carboxyl ACP thioesterase encB then breaks the thioester bond and releases the atrochrysone carboxylic acid from encA. The atrochrysone carboxylic acid is then converted to endocrocin anthrone which is further oxidized into endocrocin by encC. The exact function of encD has not been identified yet, but it negatively regulates endocrocin production, likely through the modification of endocrocin itself. The chain is 2-oxoglutarate-Fe(II) type oxidoreductase from Aspergillus fumigatus (strain ATCC MYA-4609 / CBS 101355 / FGSC A1100 / Af293) (Neosartorya fumigata).